The sequence spans 190 residues: Inner membrane-spanning protein YciB (190 aa).

The next 6 membrane-spanning stretches (helical) occupy residues 3–23 (FLFDLFPVILFFAAFKVAGIY), 24–44 (VATTVAMVATVLQIAWVWFKH), 49–69 (AMQWLSLLIIGVFGGATLIFH), 76–96 (WKPTVLYWLFGVVLLGSVVVV), 121–141 (LVWALFFLVMGCLNLYVAYNF), and 149–169 (FKLFGSMGLMVVFILAQSVWL).

Belongs to the YciB family.

The protein localises to the cell inner membrane. Functionally, plays a role in cell envelope biogenesis, maintenance of cell envelope integrity and membrane homeostasis. The polypeptide is Inner membrane-spanning protein YciB (Ralstonia pickettii (strain 12J)).